Here is a 30-residue protein sequence, read N- to C-terminus: Photosystem I reaction center subunit XII (30 aa).

The helical transmembrane segment at 7–29 threads the bilayer; it reads VYIALMAALLASVLAIRLGATLY.

The protein belongs to the PsaM family.

It localises to the plastid. The protein localises to the chloroplast thylakoid membrane. The sequence is that of Photosystem I reaction center subunit XII from Thalassiosira pseudonana (Marine diatom).